The following is a 453-amino-acid chain: 3-phosphoshikimate 1-carboxyvinyltransferase (453 aa).

The segment covering 1-12 (MDVNVTSSTVRG) has biased composition (polar residues). Residues 1–21 (MDVNVTSSTVRGTTRAPPSKS) form a disordered region. Residues lysine 20, serine 21, and arginine 25 each contribute to the 3-phosphoshikimate site. Phosphoenolpyruvate is bound at residue lysine 20. Residues glycine 97 and arginine 125 each coordinate phosphoenolpyruvate. 3-phosphoshikimate is bound by residues serine 170, serine 171, glutamine 172, serine 198, aspartate 330, and lysine 357. Glutamine 172 is a phosphoenolpyruvate binding site. The active-site Proton acceptor is the aspartate 330. The phosphoenolpyruvate site is built by arginine 361 and arginine 404.

Belongs to the EPSP synthase family. In terms of assembly, monomer.

The protein resides in the cytoplasm. It carries out the reaction 3-phosphoshikimate + phosphoenolpyruvate = 5-O-(1-carboxyvinyl)-3-phosphoshikimate + phosphate. It functions in the pathway metabolic intermediate biosynthesis; chorismate biosynthesis. Its function is as follows. Catalyzes the transfer of the enolpyruvyl moiety of phosphoenolpyruvate (PEP) to the 5-hydroxyl of shikimate-3-phosphate (S3P) to produce enolpyruvyl shikimate-3-phosphate and inorganic phosphate. The polypeptide is 3-phosphoshikimate 1-carboxyvinyltransferase (Halorubrum lacusprofundi (strain ATCC 49239 / DSM 5036 / JCM 8891 / ACAM 34)).